A 212-amino-acid polypeptide reads, in one-letter code: Agglutinin isolectin 1 (212 aa).

The N-terminal stretch at 1-26 (MKMMSTRALALGAAAVLAFAAATAQA) is a signal peptide. Position 27 is a pyrrolidone carboxylic acid (Q27). Chitin-binding type-1 domains are found at residues 27–68 (QRCG…ACWT), 69–111 (SKRC…PCRA), 112–154 (DIKC…ACST), and 155–197 (DKPC…GCDG). 16 disulfide bridges follow: C29/C44, C38/C50, C43/C57, C61/C66, C72/C87, C81/C93, C86/C100, C104/C109, C115/C130, C124/C136, C129/C143, C147/C152, C158/C173, C167/C179, C172/C186, and C190/C195. 36–38 (MEC) provides a ligand contact to substrate. 88–99 (SQYGYCGFGAEY) is a binding site for substrate. Residue 140–141 (SE) participates in substrate binding. Positions 198–212 (VFAEAITANSTLLQE) are excised as a propeptide.

In terms of assembly, homodimer, u-shaped.

Functionally, N-acetyl-D-glucosamine / N-acetyl-D-neuraminic acid binding lectin. This chain is Agglutinin isolectin 1, found in Triticum aestivum (Wheat).